A 664-amino-acid chain; its full sequence is Bifunctional polymyxin resistance protein ArnA (664 aa).

Residues Met1 to Met308 are formyltransferase ArnAFT. Residue His106 is the Proton donor; for formyltransferase activity of the active site. Residues Arg116 and Val138 to Asp142 each bind (6R)-10-formyltetrahydrofolate. The segment at Arg318–Cys664 is dehydrogenase ArnADH. NAD(+) contacts are provided by residues Asp351 and Asp372 to Ile373. Residues Ala397, Tyr402, and Thr436–Ser437 contribute to the UDP-alpha-D-glucuronate site. Glu438 serves as the catalytic Proton acceptor; for decarboxylase activity. UDP-alpha-D-glucuronate-binding positions include Arg464, Asn495, Arg529–Arg538, and Tyr616. Arg622 functions as the Proton donor; for decarboxylase activity in the catalytic mechanism.

It in the N-terminal section; belongs to the Fmt family. UDP-L-Ara4N formyltransferase subfamily. In the C-terminal section; belongs to the NAD(P)-dependent epimerase/dehydratase family. UDP-glucuronic acid decarboxylase subfamily. As to quaternary structure, homohexamer, formed by a dimer of trimers.

It catalyses the reaction UDP-alpha-D-glucuronate + NAD(+) = UDP-beta-L-threo-pentopyranos-4-ulose + CO2 + NADH. It carries out the reaction UDP-4-amino-4-deoxy-beta-L-arabinose + (6R)-10-formyltetrahydrofolate = UDP-4-deoxy-4-formamido-beta-L-arabinose + (6S)-5,6,7,8-tetrahydrofolate + H(+). It participates in nucleotide-sugar biosynthesis; UDP-4-deoxy-4-formamido-beta-L-arabinose biosynthesis; UDP-4-deoxy-4-formamido-beta-L-arabinose from UDP-alpha-D-glucuronate: step 1/3. It functions in the pathway nucleotide-sugar biosynthesis; UDP-4-deoxy-4-formamido-beta-L-arabinose biosynthesis; UDP-4-deoxy-4-formamido-beta-L-arabinose from UDP-alpha-D-glucuronate: step 3/3. The protein operates within bacterial outer membrane biogenesis; lipopolysaccharide biosynthesis. Functionally, bifunctional enzyme that catalyzes the oxidative decarboxylation of UDP-glucuronic acid (UDP-GlcUA) to UDP-4-keto-arabinose (UDP-Ara4O) and the addition of a formyl group to UDP-4-amino-4-deoxy-L-arabinose (UDP-L-Ara4N) to form UDP-L-4-formamido-arabinose (UDP-L-Ara4FN). The modified arabinose is attached to lipid A and is required for resistance to polymyxin and cationic antimicrobial peptides. The chain is Bifunctional polymyxin resistance protein ArnA from Pseudomonas syringae pv. syringae (strain B728a).